We begin with the raw amino-acid sequence, 75 residues long: DNA-directed RNA polymerase subunit omega (75 aa).

It belongs to the RNA polymerase subunit omega family. In cyanobacteria the RNAP catalytic core is composed of 2 alpha, 1 beta, 1 beta', 1 gamma and 1 omega subunit. When a sigma factor is associated with the core the holoenzyme is formed, which can initiate transcription.

It catalyses the reaction RNA(n) + a ribonucleoside 5'-triphosphate = RNA(n+1) + diphosphate. Promotes RNA polymerase assembly. Latches the N- and C-terminal regions of the beta' subunit thereby facilitating its interaction with the beta and alpha subunits. The chain is DNA-directed RNA polymerase subunit omega from Prochlorococcus marinus (strain MIT 9313).